Here is a 268-residue protein sequence, read N- to C-terminus: tRNA pseudouridine synthase A (268 aa).

Asp-63 acts as the Nucleophile in catalysis. Residue Tyr-122 participates in substrate binding.

Belongs to the tRNA pseudouridine synthase TruA family. As to quaternary structure, homodimer.

It catalyses the reaction uridine(38/39/40) in tRNA = pseudouridine(38/39/40) in tRNA. In terms of biological role, formation of pseudouridine at positions 38, 39 and 40 in the anticodon stem and loop of transfer RNAs. This Treponema denticola (strain ATCC 35405 / DSM 14222 / CIP 103919 / JCM 8153 / KCTC 15104) protein is tRNA pseudouridine synthase A.